The chain runs to 559 residues: Arginine--tRNA ligase (559 aa).

Residues 116–126 (ANPNGPLHVGH) carry the 'HIGH' region motif.

The protein belongs to the class-I aminoacyl-tRNA synthetase family.

The protein resides in the cytoplasm. It carries out the reaction tRNA(Arg) + L-arginine + ATP = L-arginyl-tRNA(Arg) + AMP + diphosphate. This Methanosphaerula palustris (strain ATCC BAA-1556 / DSM 19958 / E1-9c) protein is Arginine--tRNA ligase.